We begin with the raw amino-acid sequence, 261 residues long: Small ribosomal subunit protein uS2 (261 aa).

Position 2 is an N-acetylserine (S2). Residues 211–261 (EQNAAEDSKAEDAEEAPVADAEPDWSGETEDVDWAESGATPAAEEAAASNW) are disordered. The span at 222-244 (DAEEAPVADAEPDWSGETEDVDW) shows a compositional bias: acidic residues. Residues 245-261 (AESGATPAAEEAAASNW) show a composition bias toward low complexity.

The protein belongs to the universal ribosomal protein uS2 family. In terms of assembly, component of the small ribosomal subunit. Mature ribosomes consist of a small (40S) and a large (60S) subunit. The 40S subunit contains about 33 different proteins and 1 molecule of RNA (18S). The 60S subunit contains about 49 different proteins and 3 molecules of RNA (25S, 5.8S and 5S). Interacts with RPS21.

Its subcellular location is the cytoplasm. Its function is as follows. Required for the assembly and/or stability of the 40S ribosomal subunit. Required for the processing of the 20S rRNA-precursor to mature 18S rRNA in a late step of the maturation of 40S ribosomal subunits. The polypeptide is Small ribosomal subunit protein uS2 (Meyerozyma guilliermondii (strain ATCC 6260 / CBS 566 / DSM 6381 / JCM 1539 / NBRC 10279 / NRRL Y-324) (Yeast)).